We begin with the raw amino-acid sequence, 513 residues long: Putative thymidine phosphorylase (513 aa).

The protein belongs to the thymidine/pyrimidine-nucleoside phosphorylase family. Type 2 subfamily.

It catalyses the reaction thymidine + phosphate = 2-deoxy-alpha-D-ribose 1-phosphate + thymine. The sequence is that of Putative thymidine phosphorylase from Rhodopseudomonas palustris (strain BisB18).